A 348-amino-acid polypeptide reads, in one-letter code: Ethanol acetyltransferase 2 (348 aa).

A mitochondrion-targeting transit peptide spans 1 to 19; that stretch reads MIFNSLSIKRLSSTXTSLP. The 257-residue stretch at 49–305 folds into the AB hydrolase-1 domain; the sequence is IIFLHGIYGY…VMKERPQEYI (257 aa). Active-site charge relay system residues include Ser121, Asp145, and His294.

It belongs to the AB hydrolase superfamily.

The protein localises to the mitochondrion. The catalysed reaction is ethanol + acetyl-CoA = ethyl acetate + CoA. It carries out the reaction acetyl-CoA + H2O = acetate + CoA + H(+). It catalyses the reaction ethyl acetate + H2O = ethanol + acetate + H(+). Alcohol acetyltransferase that catalyzes the synthesis of ethyl acetate from ethanol and acetyl-CoA. Can also function as a thioesterase by hydrolyzing acetyl-CoA in the absence of ethanol, as well as esterase hydrolyzing ethyl acetate. This Hanseniaspora uvarum (Yeast) protein is Ethanol acetyltransferase 2 (EAT2).